Consider the following 433-residue polypeptide: uncharacterized protein (433 aa).

11 consecutive transmembrane segments (helical) span residues 28-48 (FAAL…SHII), 56-76 (IYGW…YPFF), 102-122 (IWIF…AVGL), 126-146 (AILT…FIVI), 164-184 (LSKL…IIAL), 207-227 (ALGF…ISAI), 250-270 (FNVG…LGAL), 304-324 (GLIA…VIDG), 345-365 (SYLN…IFYF), 375-395 (FAMI…LSLV), and 406-426 (LLWL…LFIA).

It localises to the cell membrane. This is an uncharacterized protein from Pasteurella multocida (strain Pm70).